The following is a 631-amino-acid chain: tRNA uridine 5-carboxymethylaminomethyl modification enzyme MnmG (631 aa).

FAD-binding positions include 13–18, Val-125, and Ser-180; that span reads GGGHAG. 273-287 provides a ligand contact to NAD(+); it reads GPRYCPSIEDKVMRF. Gln-370 serves as a coordination point for FAD.

Belongs to the MnmG family. In terms of assembly, homodimer. Heterotetramer of two MnmE and two MnmG subunits. FAD is required as a cofactor.

Its subcellular location is the cytoplasm. NAD-binding protein involved in the addition of a carboxymethylaminomethyl (cmnm) group at the wobble position (U34) of certain tRNAs, forming tRNA-cmnm(5)s(2)U34. The polypeptide is tRNA uridine 5-carboxymethylaminomethyl modification enzyme MnmG (Vibrio atlanticus (strain LGP32) (Vibrio splendidus (strain Mel32))).